The following is an 89-amino-acid chain: N.vectensis toxin 7 (89 aa).

The first 21 residues, 1–21, serve as a signal peptide directing secretion; the sequence is MASFFKIAVICLVMLVVCSNA. 3 disulfide bridges follow: Cys44–Cys77, Cys46–Cys69, and Cys62–Cys78.

Expressed in ectodermal gland cells.

Functionally, probable toxin. This Nematostella vectensis (Starlet sea anemone) protein is N.vectensis toxin 7.